Reading from the N-terminus, the 101-residue chain is uncharacterized protein (101 aa).

A run of 3 helical transmembrane segments spans residues 10 to 32 (FLPNFLLLGAGTALVLCLVFFLY), 45 to 67 (LGIWGSAVGLLMDTISLWNLPLI), and 77 to 99 (IAFTIWMVCAYCMYLLIPLILSH).

The protein localises to the cell membrane. This is an uncharacterized protein from Bacillus subtilis (strain 168).